The chain runs to 1297 residues: DNA-directed RNA polymerase subunit beta' (1297 aa).

Zn(2+)-binding residues include Cys-60, Cys-62, Cys-75, and Cys-78. Residues Asp-535, Asp-537, and Asp-539 each contribute to the Mg(2+) site. Residues Cys-883, Cys-961, Cys-968, and Cys-971 each contribute to the Zn(2+) site.

It belongs to the RNA polymerase beta' chain family. The RNAP catalytic core consists of 2 alpha, 1 beta, 1 beta' and 1 omega subunit. When a sigma factor is associated with the core the holoenzyme is formed, which can initiate transcription. Mg(2+) serves as cofactor. It depends on Zn(2+) as a cofactor.

The catalysed reaction is RNA(n) + a ribonucleoside 5'-triphosphate = RNA(n+1) + diphosphate. DNA-dependent RNA polymerase catalyzes the transcription of DNA into RNA using the four ribonucleoside triphosphates as substrates. In Salinispora tropica (strain ATCC BAA-916 / DSM 44818 / JCM 13857 / NBRC 105044 / CNB-440), this protein is DNA-directed RNA polymerase subunit beta'.